Here is a 290-residue protein sequence, read N- to C-terminus: Undecaprenyl-diphosphatase (290 aa).

Helical transmembrane passes span 5-25 (IGIF…YFPI), 44-64 (GTAY…TYFY), 88-108 (VRLF…GLAL), 122-142 (LSVI…SESL), 152-172 (IRVI…VPGV), 195-215 (FSFL…LKVL), 226-246 (PIVA…AWLL), and 255-275 (LVFV…LAAG).

The protein belongs to the UppP family.

It is found in the cell inner membrane. The enzyme catalyses di-trans,octa-cis-undecaprenyl diphosphate + H2O = di-trans,octa-cis-undecaprenyl phosphate + phosphate + H(+). Its function is as follows. Catalyzes the dephosphorylation of undecaprenyl diphosphate (UPP). Confers resistance to bacitracin. The protein is Undecaprenyl-diphosphatase of Gloeobacter violaceus (strain ATCC 29082 / PCC 7421).